A 428-amino-acid polypeptide reads, in one-letter code: Serine--tRNA ligase (428 aa).

235-237 (TAE) is an L-serine binding site. 266–268 (RSE) provides a ligand contact to ATP. Glutamate 289 contributes to the L-serine binding site. 353-356 (EISS) is an ATP binding site. Residue serine 389 coordinates L-serine.

Belongs to the class-II aminoacyl-tRNA synthetase family. Type-1 seryl-tRNA synthetase subfamily. In terms of assembly, homodimer. The tRNA molecule binds across the dimer.

The protein resides in the cytoplasm. It catalyses the reaction tRNA(Ser) + L-serine + ATP = L-seryl-tRNA(Ser) + AMP + diphosphate + H(+). It carries out the reaction tRNA(Sec) + L-serine + ATP = L-seryl-tRNA(Sec) + AMP + diphosphate + H(+). It functions in the pathway aminoacyl-tRNA biosynthesis; selenocysteinyl-tRNA(Sec) biosynthesis; L-seryl-tRNA(Sec) from L-serine and tRNA(Sec): step 1/1. In terms of biological role, catalyzes the attachment of serine to tRNA(Ser). Is also able to aminoacylate tRNA(Sec) with serine, to form the misacylated tRNA L-seryl-tRNA(Sec), which will be further converted into selenocysteinyl-tRNA(Sec). In Shewanella denitrificans (strain OS217 / ATCC BAA-1090 / DSM 15013), this protein is Serine--tRNA ligase.